A 209-amino-acid chain; its full sequence is Pyrrolidone-carboxylate peptidase (209 aa).

Active-site residues include E79, C142, and H164.

The protein belongs to the peptidase C15 family. In terms of assembly, homotetramer.

The protein resides in the cytoplasm. It catalyses the reaction Release of an N-terminal pyroglutamyl group from a polypeptide, the second amino acid generally not being Pro.. Its function is as follows. Removes 5-oxoproline from various penultimate amino acid residues except L-proline. The polypeptide is Pyrrolidone-carboxylate peptidase (Saccharolobus islandicus (strain L.S.2.15 / Lassen #1) (Sulfolobus islandicus)).